Here is a 330-residue protein sequence, read N- to C-terminus: Malate dehydrogenase (330 aa).

15–21 provides a ligand contact to NAD(+); that stretch reads GGTGQIA. Positions 96 and 102 each coordinate substrate. NAD(+)-binding positions include Asn109, Gln116, and 133–135; that span reads VGN. 2 residues coordinate substrate: Asn135 and Arg166. Residue His191 is the Proton acceptor of the active site.

It belongs to the LDH/MDH superfamily. MDH type 2 family.

It catalyses the reaction (S)-malate + NAD(+) = oxaloacetate + NADH + H(+). Catalyzes the reversible oxidation of malate to oxaloacetate. The chain is Malate dehydrogenase from Chlamydia caviae (strain ATCC VR-813 / DSM 19441 / 03DC25 / GPIC) (Chlamydophila caviae).